Reading from the N-terminus, the 155-residue chain is 17.4 kDa class III heat shock protein (155 aa).

The sHSP domain occupies 35–155 (GRGSSNNIPI…KPKTVQIAVS (121 aa)).

This sequence belongs to the small heat shock protein (HSP20) family. May form oligomeric structures.

The protein resides in the cytoplasm. This Arabidopsis thaliana (Mouse-ear cress) protein is 17.4 kDa class III heat shock protein (HSP17.4B).